We begin with the raw amino-acid sequence, 37 residues long: Cytochrome b6-f complex subunit 5 (37 aa).

The helical transmembrane segment at 5 to 25 (LLSGIVLGLIPITLAGLFVTA) threads the bilayer.

This sequence belongs to the PetG family. The 4 large subunits of the cytochrome b6-f complex are cytochrome b6, subunit IV (17 kDa polypeptide, PetD), cytochrome f and the Rieske protein, while the 4 small subunits are PetG, PetL, PetM and PetN. The complex functions as a dimer.

It localises to the plastid. It is found in the chloroplast thylakoid membrane. In terms of biological role, component of the cytochrome b6-f complex, which mediates electron transfer between photosystem II (PSII) and photosystem I (PSI), cyclic electron flow around PSI, and state transitions. PetG is required for either the stability or assembly of the cytochrome b6-f complex. The protein is Cytochrome b6-f complex subunit 5 of Zygnema circumcarinatum (Green alga).